The primary structure comprises 202 residues: Outer-membrane lipoprotein LolB (202 aa).

Residues 1 to 24 (MESKEQHLIRQYFILAMFFLFLAG) form the signal peptide. The N-palmitoyl cysteine moiety is linked to residue cysteine 25. The S-diacylglycerol cysteine moiety is linked to residue cysteine 25.

This sequence belongs to the LolB family. Monomer.

The protein resides in the cell outer membrane. Plays a critical role in the incorporation of lipoproteins in the outer membrane after they are released by the LolA protein. The protein is Outer-membrane lipoprotein LolB of Pseudoalteromonas translucida (strain TAC 125).